The primary structure comprises 166 residues: NAD(P)H-quinone oxidoreductase subunit I, chloroplastic (166 aa).

2 consecutive 4Fe-4S ferredoxin-type domains span residues 55–84 (GRIH…VDWK) and 95–124 (LNYS…MTEE). Positions 64, 67, 70, 74, 104, 107, 110, and 114 each coordinate [4Fe-4S] cluster.

This sequence belongs to the complex I 23 kDa subunit family. NDH is composed of at least 16 different subunits, 5 of which are encoded in the nucleus. It depends on [4Fe-4S] cluster as a cofactor.

Its subcellular location is the plastid. It is found in the chloroplast thylakoid membrane. It catalyses the reaction a plastoquinone + NADH + (n+1) H(+)(in) = a plastoquinol + NAD(+) + n H(+)(out). The catalysed reaction is a plastoquinone + NADPH + (n+1) H(+)(in) = a plastoquinol + NADP(+) + n H(+)(out). In terms of biological role, NDH shuttles electrons from NAD(P)H:plastoquinone, via FMN and iron-sulfur (Fe-S) centers, to quinones in the photosynthetic chain and possibly in a chloroplast respiratory chain. The immediate electron acceptor for the enzyme in this species is believed to be plastoquinone. Couples the redox reaction to proton translocation, and thus conserves the redox energy in a proton gradient. The chain is NAD(P)H-quinone oxidoreductase subunit I, chloroplastic from Lactuca sativa (Garden lettuce).